We begin with the raw amino-acid sequence, 551 residues long: Serendipity locus protein alpha (551 aa).

Its subcellular location is the cytoplasm. The protein resides in the cell membrane. Required for the cellularization of the syncytial blastoderm embryo. Involved in the localization of the actin filaments just prior to and during plasma membrane invagination. Sry-alpha together with nullo and bnk may provide auxiliary functions, by acting both to stabilize a large and dynamic microfilament structure and regulate its functions. This Drosophila pseudoobscura pseudoobscura (Fruit fly) protein is Serendipity locus protein alpha (Sry-alpha).